Reading from the N-terminus, the 131-residue chain is Profilin-A (131 aa).

This sequence belongs to the profilin family. As to quaternary structure, occurs in many kinds of cells as a complex with monomeric actin in a 1:1 ratio.

It localises to the cytoplasm. The protein localises to the cytoskeleton. In terms of biological role, binds to actin and affects the structure of the cytoskeleton. At high concentrations, profilin prevents the polymerization of actin, whereas it enhances it at low concentrations. By binding to PIP2, it inhibits the formation of IP3 and DG. May serve as a modulator in pollen germination and pollen tube growth. The protein is Profilin-A of Oryza sativa subsp. japonica (Rice).